Here is a 655-residue protein sequence, read N- to C-terminus: Integrin beta-5 (655 aa).

Residues 1–234 form the VWFA domain; the sequence is DLSLSMKDDL…QLIINAYNSI (234 aa). The Extracellular portion of the chain corresponds to 1 to 575; that stretch reads DLSLSMKDDL…REPECGNTPN (575 aa). Serine 3 and serine 5 together coordinate Mg(2+). Ca(2+) is bound by residues serine 5, aspartate 8, aspartate 9, and aspartate 40. A disulfide bridge connects residues cysteine 58 and cysteine 67. Residues asparagine 98, aspartate 100, proline 102, and glutamate 103 each contribute to the Ca(2+) site. Residue glutamate 103 coordinates Mg(2+). Cysteine 115 and cysteine 156 are joined by a disulfide. N-linked (GlcNAc...) asparagine glycosylation occurs at asparagine 203. Glycine 218 serves as a coordination point for Ca(2+). 13 disulfide bridges follow: cysteine 257/cysteine 269, cysteine 289/cysteine 317, cysteine 321/cysteine 340, cysteine 332/cysteine 343, cysteine 345/cysteine 354, cysteine 356/cysteine 386, cysteine 369/cysteine 384, cysteine 378/cysteine 389, cysteine 391/cysteine 404, cysteine 406/cysteine 427, cysteine 411/cysteine 425, cysteine 419/cysteine 430, and cysteine 432/cysteine 441. A glycan (N-linked (GlcNAc...) asparagine) is linked at asparagine 316. I-EGF domains are found at residues 321–355, 356–405, 406–442, and 443–482; these read CSVG…TRCE, CQDG…PFCE, CDNF…DNCN, and CSTD…EMCE. Asparagine 408 carries N-linked (GlcNAc...) asparagine glycosylation. Asparagine 442 carries N-linked (GlcNAc...) asparagine glycosylation. 9 disulfides stabilise this stretch: cysteine 443–cysteine 466, cysteine 450–cysteine 464, cysteine 458–cysteine 469, cysteine 471–cysteine 481, cysteine 484–cysteine 487, cysteine 491–cysteine 538, cysteine 497–cysteine 517, cysteine 500–cysteine 513, and cysteine 546–cysteine 570. Residues asparagine 510 and asparagine 561 are each glycosylated (N-linked (GlcNAc...) asparagine). The helical transmembrane segment at 576 to 598 threads the bilayer; that stretch reads AMTILLAVVGSILLVGLALLAIW. Residues 599–655 lie on the Cytoplasmic side of the membrane; sequence KLLVTIHDRREFAKFQSERSRARYEMASNPLYRKPISTHTVDFTFNKFNKSYNGTVD. Serine 626 is modified (phosphoserine).

Belongs to the integrin beta chain family. As to quaternary structure, heterodimer of an alpha and a beta subunit. Beta-5 (ITGB5) associates with alpha-V (ITGAV). Interacts with MYO10. Interacts with DAB2. Integrin ITGAV:ITGB5 interacts with FBLN5 (via N-terminus). ITGAV:ITGB5 interacts with CCN3. Interacts with tensin TNS3; TNS3 also interacts with PEAK1, thus acting as an adapter molecule to bridge the association of PEAK1 with ITGB5.

The protein resides in the cell membrane. Its function is as follows. Integrin alpha-V/beta-5 (ITGAV:ITGB5) is a receptor for fibronectin. It recognizes the sequence R-G-D in its ligand. The sequence is that of Integrin beta-5 (ITGB5) from Papio cynocephalus (Yellow baboon).